Consider the following 1648-residue polypeptide: Putative 1-phosphatidylinositol-3-phosphate 5-kinase FAB1C (1648 aa).

Over residues 97–106 (YDKVHPRDSP) the composition is skewed to basic and acidic residues. Disordered regions lie at residues 97 to 116 (YDKV…ATES), 241 to 276 (QEDH…NDDA), 721 to 746 (SEIP…ENQL), and 1083 to 1139 (KTGD…GTSL). Positions 1084–1130 (TGDDNAPRNPEMHDPPKIDRRMQEGSDERDEQSHTDSEANGDNKDPE) are enriched in basic and acidic residues. The PIPK domain maps to 1316–1639 (NLNNRESEPS…RFRKAMTTYF (324 aa)).

In terms of assembly, component of the PI(3,5)P2 regulatory complex at least composed of ATG18, SAC/FIG4, FAB1 and VAC14. It depends on Mg(2+) as a cofactor. Mn(2+) serves as cofactor.

The catalysed reaction is a 1,2-diacyl-sn-glycero-3-phospho-(1D-myo-inositol-3-phosphate) + ATP = a 1,2-diacyl-sn-glycero-3-phospho-(1D-myo-inositol-3,5-bisphosphate) + ADP + H(+). In terms of biological role, the PI(3,5)P2 regulatory complex regulates both the synthesis and turnover of phosphatidylinositol 3,5-bisphosphate (PtdIns(3,5)P2). Catalyzes the phosphorylation of phosphatidylinositol 3-phosphate on the fifth hydroxyl of the myo-inositol ring, to form phosphatidylinositol 3,5-bisphosphate. In Arabidopsis thaliana (Mouse-ear cress), this protein is Putative 1-phosphatidylinositol-3-phosphate 5-kinase FAB1C (FAB1C).